The following is a 359-amino-acid chain: MAKLPVEKMRELERRFGEIEARMSAGPAADVYVKLASEYSELQPVVTKIRAYEKAIAELADLETLLEDKSVDREMRDLAELELPEVKEQIEALEQEMQILLLPKDAADEKSAILEIRAGTGGSEAALFAGDLFRMYERFSAEKGWKVEVLSASEGEAGGYKEIIATITGRGVFAKLKFESGVHRVQRVPETEAGGRIHTSAATVAVLPEAEEIDIEIRPEDIRIDTMRSSGAGGQHVNTTDSAVRITHLPSGIVVTSSEKSQHQNRAKAMQVLRSRLYDAERQRADSERSADRKSQVGSGDRSERIRTYNFPQGRITDHRINLTLYKLDRMMEGEIEEVVDALMADYQASQLAQLGEQQ.

At Gln-235 the chain carries N5-methylglutamine. The segment at 280–306 (AERQRADSERSADRKSQVGSGDRSERI) is disordered.

It belongs to the prokaryotic/mitochondrial release factor family. In terms of processing, methylated by PrmC. Methylation increases the termination efficiency of RF1.

Its subcellular location is the cytoplasm. In terms of biological role, peptide chain release factor 1 directs the termination of translation in response to the peptide chain termination codons UAG and UAA. The sequence is that of Peptide chain release factor 1 from Rhizobium leguminosarum bv. trifolii (strain WSM2304).